The following is a 269-amino-acid chain: Undecaprenyl-diphosphatase (269 aa).

The next 7 helical transmembrane spans lie at G40–F59, W87–I107, A116–G136, A160–F180, F188–L208, P220–L240, and S247–F267.

Belongs to the UppP family.

The protein localises to the cell inner membrane. It catalyses the reaction di-trans,octa-cis-undecaprenyl diphosphate + H2O = di-trans,octa-cis-undecaprenyl phosphate + phosphate + H(+). In terms of biological role, catalyzes the dephosphorylation of undecaprenyl diphosphate (UPP). Confers resistance to bacitracin. The sequence is that of Undecaprenyl-diphosphatase from Geobacter metallireducens (strain ATCC 53774 / DSM 7210 / GS-15).